The sequence spans 420 residues: UDP-N-acetylmuramoylalanine--D-glutamate ligase (420 aa).

109–115 (GSVGKST) lines the ATP pocket.

The protein belongs to the MurCDEF family.

The protein localises to the cytoplasm. It carries out the reaction UDP-N-acetyl-alpha-D-muramoyl-L-alanine + D-glutamate + ATP = UDP-N-acetyl-alpha-D-muramoyl-L-alanyl-D-glutamate + ADP + phosphate + H(+). The protein operates within cell wall biogenesis; peptidoglycan biosynthesis. In terms of biological role, cell wall formation. Catalyzes the addition of glutamate to the nucleotide precursor UDP-N-acetylmuramoyl-L-alanine (UMA). The polypeptide is UDP-N-acetylmuramoylalanine--D-glutamate ligase (Fervidobacterium nodosum (strain ATCC 35602 / DSM 5306 / Rt17-B1)).